The chain runs to 355 residues: Tyrosine recombinase XerC (355 aa).

The Core-binding (CB) domain maps to Thr4–Tyr89. Residues Lys137–Thr181 are disordered. The segment covering Gly141 to Lys154 has biased composition (low complexity). The Tyr recombinase domain occupies Lys158–Gly349. Over residues Ala168–Ala178 the composition is skewed to basic and acidic residues. Active-site residues include Arg200, Lys224, His301, Arg304, and His327. Catalysis depends on Tyr336, which acts as the O-(3'-phospho-DNA)-tyrosine intermediate.

Belongs to the 'phage' integrase family. XerC subfamily. Forms a cyclic heterotetrameric complex composed of two molecules of XerC and two molecules of XerD.

Its subcellular location is the cytoplasm. Site-specific tyrosine recombinase, which acts by catalyzing the cutting and rejoining of the recombining DNA molecules. The XerC-XerD complex is essential to convert dimers of the bacterial chromosome into monomers to permit their segregation at cell division. It also contributes to the segregational stability of plasmids. The protein is Tyrosine recombinase XerC of Bifidobacterium longum (strain DJO10A).